We begin with the raw amino-acid sequence, 662 residues long: Protein Aster-C (662 aa).

The tract at residues 1-34 (MEGAPTVRQVMNEGDSSLATDLQEDVEENPSPTV) is disordered. In terms of domain architecture, GRAM spans 69-136 (EEYRRQFTHL…KNITFMTKEK (68 aa)). 2 disordered regions span residues 212–237 (SIEDVQPRSPGRSSLDDSGERDEKLS) and 249–284 (RVSETESFDGNSSKGGLGKEESQNEKQTKKSLLPTL). Basic and acidic residues predominate over residues 265-276 (LGKEESQNEKQT). The 172-residue stretch at 326-497 (HGRLFINRIF…DLLIEESVLN (172 aa)) folds into the VASt domain. Residues 557 to 577 (LIVVMSIFVLLLVLLNVTLFL) form a helical membrane-spanning segment.

The protein resides in the endoplasmic reticulum membrane. It is found in the cell membrane. Its function is as follows. Cholesterol transporter that mediates non-vesicular transport of cholesterol from the plasma membrane (PM) to the endoplasmic reticulum (ER). Contains unique domains for binding cholesterol and the PM, thereby serving as a molecular bridge for the transfer of cholesterol from the PM to the ER. Plays a crucial role in cholesterol homeostasis and has the unique ability to localize to the PM based on the level of membrane cholesterol. In lipid-poor conditions localizes to the ER membrane and in response to excess cholesterol in the PM is recruited to the endoplasmic reticulum-plasma membrane contact sites (EPCS) which is mediated by the GRAM domain. At the EPCS, the sterol-binding VASt/ASTER domain binds to the cholesterol in the PM and facilitates its transfer from the PM to ER. The protein is Protein Aster-C (GRAMD1C) of Homo sapiens (Human).